The primary structure comprises 105 residues: Diuretic hormone class 2 (105 aa).

The N-terminal stretch at 1–23 (MTVLCTLMAFVMVVAISSLTVDA) is a signal peptide. The propeptide occupies 24–63 (IPHSHESYWDQQDDIDRDEFLELLSRLSRTVMNRPEMENS). The residue at position 96 (Pro96) is a Proline amide. The propeptide occupies 101–105 (RSEQA).

In terms of tissue distribution, expressed in central brain, antennal lobes, retrocerebral complex and gnathal, thoracic and abdominal ganglia but not in optical lobes (at protein level).

It localises to the secreted. Regulation of fluid secretion. Stimulates Malpighian tubules fluid secretion. The sequence is that of Diuretic hormone class 2 from Camponotus floridanus (Florida carpenter ant).